Reading from the N-terminus, the 904-residue chain is Shieldin complex subunit 2 (904 aa).

The segment at Met-1–Glu-60 is sufficient for interaction with SHLD3 and MAD2L2. An interaction with ASTE1 region spans residues Met-1–Leu-568. The interval Lys-721–Phe-891 is mediates interaction with SHLD1.

Belongs to the SHLD2 family. In terms of assembly, component of the shieldin complex, consisting of SHLD1, SHLD2, SHLD3 and MAD2L2/REV7. Within the complex, SHLD2 forms a scaffold which interacts with a SHLD3-MAD2L2 subcomplex via its N-terminus, and with SHLD1 via its C-terminus. Interacts with TP53BP1. Interacts with RIF1. Interacts with ASTE1.

Its subcellular location is the chromosome. In terms of biological role, component of the shieldin complex, which plays an important role in repair of DNA double-stranded breaks (DSBs). During G1 and S phase of the cell cycle, the complex functions downstream of TP53BP1 to promote non-homologous end joining (NHEJ) and suppress DNA end resection. Mediates various NHEJ-dependent processes including immunoglobulin class-switch recombination, and fusion of unprotected telomeres. The polypeptide is Shieldin complex subunit 2 (Pongo abelii (Sumatran orangutan)).